Consider the following 1896-residue polypeptide: Plexin-A1 (1896 aa).

An N-terminal signal peptide occupies residues 1-26 (MPLPPRSLQVLLLLLLLLLLLPGMWA). The Sema domain occupies 27 to 512 (EAGLPRAGGG…TEKQVTRVPV (486 aa)). Topologically, residues 27-1244 (EAGLPRAGGG…VYSDSLLTLP (1218 aa)) are extracellular. The N-linked (GlcNAc...) asparagine glycan is linked to N77. Disulfide bonds link C95-C104, C130-C138, C286-C407, C302-C358, C376-C395, C515-C532, C521-C563, C524-C541, C535-C547, and C598-C617. 3 N-linked (GlcNAc...) asparagine glycosylation sites follow: N660, N672, and N701. IPT/TIG domains are found at residues 864-959 (PKIL…FTFV), 961-1045 (PTFY…YNYT), 1048-1147 (PTIL…FLYY), and 1150-1236 (PVLE…LQVY). A glycan (N-linked (GlcNAc...) asparagine) is linked at N1043. N-linked (GlcNAc...) asparagine glycosylation is found at N1187 and N1212. Residues 1245–1265 (AIVGIGGGGGLLLLVIVAVLI) form a helical membrane-spanning segment. A coiled-coil region spans residues 1264–1317 (LIAYKRKSRDADRTLKRLQLQMDNLESRVALECKEAFAELQTDIHELTNDLDGA). Residues 1266–1896 (AYKRKSRDAD…QVVDTMALSS (631 aa)) lie on the Cytoplasmic side of the membrane.

Belongs to the plexin family. Interacts directly with NRP1 and NRP2. Interacts with PLXN1B. Interacts with FARP2, RND1 and KDR/VEGFR2. Binding of SEMA3A leads to dissociation of FARP2. Interacts with CRMP1, DPYSL2/CRMP2, DPYSL3/CRMP3 and DPYSL4/CRMP4. Interacts (via TIG domains) with TREM2; the interaction mediates SEMA6D binding and signaling through TYROBP. In terms of tissue distribution, detected in fetal brain, lung, liver and kidney.

Its subcellular location is the cell membrane. Coreceptor for SEMA3A, SEMA3C, SEMA3F and SEMA6D. Necessary for signaling by class 3 semaphorins and subsequent remodeling of the cytoskeleton. Plays a role in axon guidance, invasive growth and cell migration. Class 3 semaphorins bind to a complex composed of a neuropilin and a plexin. The plexin modulates the affinity of the complex for specific semaphorins, and its cytoplasmic domain is required for the activation of down-stream signaling events in the cytoplasm. Acts as coreceptor of TREM2 for SEMA6D in dendritic cells and is involved in the generation of immune responses and skeletal homeostasis. The sequence is that of Plexin-A1 from Homo sapiens (Human).